Consider the following 311-residue polypeptide: Arginine/serine-rich protein 1 (311 aa).

Positions 1-125 are disordered; the sequence is MSTYVNDMWP…RSRSRSRGRS (125 aa). Phosphoserine is present on Ser-12. Residues 20–31 show a composition bias toward low complexity; that stretch reads STSRSGGSSRLS. The segment covering 32–123 has biased composition (basic residues); the sequence is SRSRSRSFSR…RSRSRSRSRG (92 aa). A phosphoserine mark is found at Ser-109 and Ser-111. Arg-135 carries the post-translational modification Omega-N-methylarginine.

The protein belongs to the RSRP family. In terms of processing, phosphorylated. Phosphorylation at Ser-109 and Ser-111 mediates the interaction with spliceosome proteins.

It is found in the nucleus. Its function is as follows. Probably acts as a spliceosomal factor that contributes to spliceosome assembly and regulates the isoform switching of proteins such as PARP6. The chain is Arginine/serine-rich protein 1 (RSRP1) from Pongo abelii (Sumatran orangutan).